Consider the following 356-residue polypeptide: N-acyl-phosphatidylethanolamine-hydrolyzing phospholipase D 1 (356 aa).

Positions 144 and 146 each coordinate Zn(2+). Position 147 (tyrosine 147) interacts with an N-acyl-1,2-diacyl-sn-glycero-3-phosphoethanolamine. 4 residues coordinate Zn(2+): aspartate 148, histidine 149, histidine 217, and aspartate 248. Histidine 286 serves as a coordination point for an N-acyl-1,2-diacyl-sn-glycero-3-phosphoethanolamine. Histidine 308 contacts Zn(2+).

The protein belongs to the NAPE-PLD family. It depends on Zn(2+) as a cofactor. In terms of tissue distribution, expressed in interneurons that are in close proximity to the primary sensory neurons. Predominantly expressed in the pharynx but can also be found in cell bodies of the dorsal and ventral nerve cords.

It catalyses the reaction an N-acyl-1,2-diacyl-sn-glycero-3-phosphoethanolamine + H2O = an N-acylethanolamine + a 1,2-diacyl-sn-glycero-3-phosphate + H(+). It carries out the reaction 1,2-dihexadecanoyl-sn-glycero-3-phospho-(N-hexadecanoyl)-ethanolamine + H2O = 1,2-dihexadecanoyl-sn-glycero-3-phosphate + N-hexadecanoylethanolamine + H(+). The enzyme catalyses N-(5Z,8Z,11Z,14Z-eicosatetraenoyl)-1,2-di-(9Z-octadecenoyl)-sn-glycero-3-phosphoethanolamine + H2O = N-(5Z,8Z,11Z,14Z-eicosatetraenoyl)-ethanolamine + 1,2-di-(9Z-octadecenoyl)-sn-glycero-3-phosphate + H(+). Its function is as follows. D-type phospholipase that hydrolyzes N-acyl-phosphatidylethanolamines (NAPEs) to produce bioactive N-acylethanolamines/fatty acid ethanolamides (NAEs/FAEs) and phosphatidic acid. NAEs are bioactive lipids that are involved in diverse physiological processes such as growth and lifespan. The chain is N-acyl-phosphatidylethanolamine-hydrolyzing phospholipase D 1 from Caenorhabditis elegans.